We begin with the raw amino-acid sequence, 356 residues long: Protein-arginine kinase (356 aa).

The Phosphagen kinase C-terminal domain occupies 22-249 (FRPISTLSLS…SKILSAETEA (228 aa)). ATP-binding positions include 25 to 29 (ISTLS), 172 to 176 (VARAF), and 202 to 207 (SSLLPL).

This sequence belongs to the ATP:guanido phosphotransferase family.

The catalysed reaction is L-arginyl-[protein] + ATP = N(omega)-phospho-L-arginyl-[protein] + ADP + H(+). Catalyzes the specific phosphorylation of arginine residues in proteins. The polypeptide is Protein-arginine kinase (Chlamydia muridarum (strain MoPn / Nigg)).